A 239-amino-acid chain; its full sequence is tRNA (guanine-N(1)-)-methyltransferase (239 aa).

Residues glycine 108 and 127–132 (LGDFVL) contribute to the S-adenosyl-L-methionine site.

This sequence belongs to the RNA methyltransferase TrmD family. In terms of assembly, homodimer.

It localises to the cytoplasm. The enzyme catalyses guanosine(37) in tRNA + S-adenosyl-L-methionine = N(1)-methylguanosine(37) in tRNA + S-adenosyl-L-homocysteine + H(+). In terms of biological role, specifically methylates guanosine-37 in various tRNAs. In Streptococcus pyogenes serotype M6 (strain ATCC BAA-946 / MGAS10394), this protein is tRNA (guanine-N(1)-)-methyltransferase.